We begin with the raw amino-acid sequence, 338 residues long: Heat-inducible transcription repressor HrcA (338 aa).

Belongs to the HrcA family.

Its function is as follows. Negative regulator of class I heat shock genes (grpE-dnaK-dnaJ and groELS operons). Prevents heat-shock induction of these operons. The chain is Heat-inducible transcription repressor HrcA from Thermotoga sp. (strain RQ2).